A 275-amino-acid polypeptide reads, in one-letter code: Tryptophan synthase alpha chain (275 aa).

Catalysis depends on proton acceptor residues Glu-51 and Asp-62.

The protein belongs to the TrpA family. As to quaternary structure, tetramer of two alpha and two beta chains.

The catalysed reaction is (1S,2R)-1-C-(indol-3-yl)glycerol 3-phosphate + L-serine = D-glyceraldehyde 3-phosphate + L-tryptophan + H2O. Its pathway is amino-acid biosynthesis; L-tryptophan biosynthesis; L-tryptophan from chorismate: step 5/5. In terms of biological role, the alpha subunit is responsible for the aldol cleavage of indoleglycerol phosphate to indole and glyceraldehyde 3-phosphate. This is Tryptophan synthase alpha chain from Methanopyrus kandleri (strain AV19 / DSM 6324 / JCM 9639 / NBRC 100938).